Consider the following 308-residue polypeptide: Probable 5-dehydro-4-deoxyglucarate dehydratase (308 aa).

This sequence belongs to the DapA family.

It catalyses the reaction 5-dehydro-4-deoxy-D-glucarate + H(+) = 2,5-dioxopentanoate + CO2 + H2O. The protein operates within carbohydrate acid metabolism; D-glucarate degradation; 2,5-dioxopentanoate from D-glucarate: step 2/2. This Bacillus subtilis (strain 168) protein is Probable 5-dehydro-4-deoxyglucarate dehydratase (ycbC).